The sequence spans 314 residues: MSHSANFYRLETRLQSLTGKAIGDFGMIEDGDTVLVCMSGGKDSYTMLSVLTALQKRAPIQFKLIAMNLDQKQPGFPEHVLPAYLKSLGVEYVIVEADTYSIVKEKVPEGKTTCSLCSRLRRGVIYRTAKELGANKIALGHHRDDIVNTFFLNMFFGGKMKAMPPKLATDDGQHIVIRPLAYCAEKDIASYARAMAFPIIPCNLCGSQENLQRKKVSEMLQAWERENPGRIDNIFAALRNVVPSHLADTDLFPFTGLATGLAKIDEASLFGETTFTQQALTFTGNVEANRMEFVRFDKIQKVQEAPERASEPSA.

Positions 39-44 (SGGKDS) match the PP-loop motif motif. Residues cysteine 114, cysteine 117, and cysteine 205 each contribute to the [4Fe-4S] cluster site.

This sequence belongs to the TtcA family. In terms of assembly, homodimer. Requires Mg(2+) as cofactor. [4Fe-4S] cluster serves as cofactor.

The protein localises to the cytoplasm. It catalyses the reaction cytidine(32) in tRNA + S-sulfanyl-L-cysteinyl-[cysteine desulfurase] + AH2 + ATP = 2-thiocytidine(32) in tRNA + L-cysteinyl-[cysteine desulfurase] + A + AMP + diphosphate + H(+). It functions in the pathway tRNA modification. Catalyzes the ATP-dependent 2-thiolation of cytidine in position 32 of tRNA, to form 2-thiocytidine (s(2)C32). The sulfur atoms are provided by the cysteine/cysteine desulfurase (IscS) system. The sequence is that of tRNA-cytidine(32) 2-sulfurtransferase from Cupriavidus metallidurans (strain ATCC 43123 / DSM 2839 / NBRC 102507 / CH34) (Ralstonia metallidurans).